A 1004-amino-acid polypeptide reads, in one-letter code: Polyhomeotic-like protein 1 (1004 aa).

The segment covering 1-22 (METESEQNSNSTNGSSSSGGSS) has biased composition (low complexity). Disordered regions lie at residues 1-24 (METESEQNSNSTNGSSSSGGSSRP), 212-241 (NQQASAQGPQMQGSTQKAIPPGASPVSSLS), 261-355 (SLNL…NLTR), 432-512 (QQQQ…QLGA), 556-589 (RGMPGTVQSGQAHLASSPPSSQAPGALQECPPTL), and 636-672 (TLAVKRKADSEEERDDVSTLGSMLPAKASPVAESPKV). Residues 212–228 (NQQASAQGPQMQGSTQK) are compositionally biased toward polar residues. A compositionally biased stretch (gly residues) spans 279–303 (MGPGGGGQAHGGLGQLPSSGMGGGS). 2 stretches are compositionally biased toward polar residues: residues 319 to 329 (QTVTVSQGSQT) and 344 to 355 (SGQQNVGMNLTR). The span at 432-447 (QQQQQQQQPQATTLTA) shows a compositional bias: low complexity. Positions 448-458 (PQPPQVPPTQQ) are enriched in pro residues. Over residues 459 to 482 (VPPSQSQQQAQTLVVQPMLQSSPL) the composition is skewed to low complexity. Positions 483–495 (SLPPDAAPKPPIP) are enriched in pro residues. A compositionally biased stretch (low complexity) spans 566–583 (QAHLASSPPSSQAPGALQ). S645 carries the phosphoserine modification. Residue K763 forms a Glycyl lysine isopeptide (Lys-Gly) (interchain with G-Cter in SUMO2) linkage. The segment at 791–825 (LDKKANLLKCEYCGKYAPAEQFRGSKRFCSMTCAK) adopts an FCS-type zinc-finger fold. 4 residues coordinate Zn(2+): C800, C803, C819, and C823. The segment at 848–928 (ANYARVRRRG…APPTPELHGI (81 aa)) is disordered. S898 carries the post-translational modification Phosphoserine. The residue at position 922 (T922) is a Phosphothreonine. Residues 940 to 1004 (WSVEEVYEFI…CAKINVLKET (65 aa)) enclose the SAM domain.

In terms of assembly, homodimer. Component of a PRC1-like complex. Interacts with RNF2 and CBX7. Interacts with PHC2, PHC2 and BMI1.

The protein resides in the nucleus. In terms of biological role, component of a Polycomb group (PcG) multiprotein PRC1-like complex, a complex class required to maintain the transcriptionally repressive state of many genes, including Hox genes, throughout development. PcG PRC1 complex acts via chromatin remodeling and modification of histones; it mediates monoubiquitination of histone H2A 'Lys-119', rendering chromatin heritably changed in its expressibility. Required for proper control of cellular levels of GMNN expression. The protein is Polyhomeotic-like protein 1 (PHC1) of Homo sapiens (Human).